Reading from the N-terminus, the 301-residue chain is Glycine cleavage system transcriptional activator homolog (301 aa).

The 58-residue stretch at 10 to 67 (PPLNSLKSFESAARYLSFTKAADELCVTQAAVSHQIKLLEXFLGIDLFKRKNRSLELT) folds into the HTH lysR-type domain. Positions 27-46 (FTKAADELCVTQAAVSHQIK) form a DNA-binding region, H-T-H motif.

Belongs to the LysR transcriptional regulatory family.

It localises to the cytoplasm. Not known, the gcv operon regulated by the E.coli homolog does not exist in H.influenzae, so it probably acts as a transcriptional regulator on some other operon. This Haemophilus influenzae (strain ATCC 51907 / DSM 11121 / KW20 / Rd) protein is Glycine cleavage system transcriptional activator homolog (gcvA).